Consider the following 397-residue polypeptide: Argininosuccinate synthase (397 aa).

8–16 (AYSGGLDTS) contributes to the ATP binding site. Positions 86 and 91 each coordinate L-citrulline. Gly116 lines the ATP pocket. L-aspartate is bound by residues Thr118, Asn122, and Asp123. Asn122 is an L-citrulline binding site. Arg126, Ser175, Ser184, Glu260, and Tyr272 together coordinate L-citrulline.

The protein belongs to the argininosuccinate synthase family. Type 1 subfamily. In terms of assembly, homotetramer.

The protein localises to the cytoplasm. It catalyses the reaction L-citrulline + L-aspartate + ATP = 2-(N(omega)-L-arginino)succinate + AMP + diphosphate + H(+). It functions in the pathway amino-acid biosynthesis; L-arginine biosynthesis; L-arginine from L-ornithine and carbamoyl phosphate: step 2/3. This is Argininosuccinate synthase from Clostridium botulinum (strain 657 / Type Ba4).